We begin with the raw amino-acid sequence, 457 residues long: tRNA-2-methylthio-N(6)-dimethylallyladenosine synthase (457 aa).

The MTTase N-terminal domain occupies 3-120 (KKVYIKTFGC…LPQMIDQRRA (118 aa)). [4Fe-4S] cluster is bound by residues C12, C49, C83, C157, C161, and C164. Residues 143–377 (RVEGPSAFVS…QATIEENVAR (235 aa)) enclose the Radical SAM core domain. The region spanning 380 to 447 (RSMVGKVERI…PHSLRGELLL (68 aa)) is the TRAM domain.

It belongs to the methylthiotransferase family. MiaB subfamily. Monomer. [4Fe-4S] cluster serves as cofactor.

It is found in the cytoplasm. The enzyme catalyses N(6)-dimethylallyladenosine(37) in tRNA + (sulfur carrier)-SH + AH2 + 2 S-adenosyl-L-methionine = 2-methylsulfanyl-N(6)-dimethylallyladenosine(37) in tRNA + (sulfur carrier)-H + 5'-deoxyadenosine + L-methionine + A + S-adenosyl-L-homocysteine + 2 H(+). Its function is as follows. Catalyzes the methylthiolation of N6-(dimethylallyl)adenosine (i(6)A), leading to the formation of 2-methylthio-N6-(dimethylallyl)adenosine (ms(2)i(6)A) at position 37 in tRNAs that read codons beginning with uridine. The polypeptide is tRNA-2-methylthio-N(6)-dimethylallyladenosine synthase (Burkholderia ambifaria (strain MC40-6)).